Consider the following 303-residue polypeptide: UDP-3-O-acyl-N-acetylglucosamine deacetylase (303 aa).

His78, His237, and Asp241 together coordinate Zn(2+). Catalysis depends on His264, which acts as the Proton donor.

The protein belongs to the LpxC family. It depends on Zn(2+) as a cofactor.

It catalyses the reaction a UDP-3-O-[(3R)-3-hydroxyacyl]-N-acetyl-alpha-D-glucosamine + H2O = a UDP-3-O-[(3R)-3-hydroxyacyl]-alpha-D-glucosamine + acetate. It functions in the pathway glycolipid biosynthesis; lipid IV(A) biosynthesis; lipid IV(A) from (3R)-3-hydroxytetradecanoyl-[acyl-carrier-protein] and UDP-N-acetyl-alpha-D-glucosamine: step 2/6. Its function is as follows. Catalyzes the hydrolysis of UDP-3-O-myristoyl-N-acetylglucosamine to form UDP-3-O-myristoylglucosamine and acetate, the committed step in lipid A biosynthesis. The chain is UDP-3-O-acyl-N-acetylglucosamine deacetylase from Coxiella burnetii (strain CbuK_Q154) (Coxiella burnetii (strain Q154)).